Here is a 478-residue protein sequence, read N- to C-terminus: Proline--tRNA ligase (478 aa).

It belongs to the class-II aminoacyl-tRNA synthetase family. ProS type 3 subfamily. In terms of assembly, homodimer.

The protein localises to the cytoplasm. The catalysed reaction is tRNA(Pro) + L-proline + ATP = L-prolyl-tRNA(Pro) + AMP + diphosphate. In terms of biological role, catalyzes the attachment of proline to tRNA(Pro) in a two-step reaction: proline is first activated by ATP to form Pro-AMP and then transferred to the acceptor end of tRNA(Pro). This Oceanobacillus iheyensis (strain DSM 14371 / CIP 107618 / JCM 11309 / KCTC 3954 / HTE831) protein is Proline--tRNA ligase.